The following is a 63-amino-acid chain: LECHRRGSFISDGKITCSAKKTFCCKMYEKIFGIYWYGCAKTYTEKNTWNVYSKCCTTNLCNT.

4 cysteine pairs are disulfide-bonded: Cys-3-Cys-24, Cys-17-Cys-39, Cys-25-Cys-55, and Cys-56-Cys-61.

Post-translationally, contains 4 disulfide bonds. As to expression, expressed by the venom gland.

The protein resides in the secreted. Functionally, activates bacterial pH-gated potassium channel KcsA by binding to its extracellular domain, probably at a site different from channel inhibitors. Increases both mean open time and open probability of KscA. This is Toxin Tx7335 from Dendroaspis angusticeps (Eastern green mamba).